The following is a 677-amino-acid chain: mRNA 3'-end-processing protein RNA14 (677 aa).

6 HAT repeats span residues 56–88 (ESYA…GELA), 90–124 (DEFE…YIRR), 138–170 (VIVK…FLEQ), 181–214 (QRID…WEQE), 257–289 (RTAN…WERE), and 298–330 (MLSQ…YISE).

As to quaternary structure, component of the CFIA complex, which is composed of RNA14, RNA15, PCF11 and CLP1. Interacts with FIP1, PFS2, YSH1 and probably also with RNA15. Probably interacts with the phosphorylated CTD domain of RPB1/RNA polymerase II.

The protein localises to the nucleus. Its subcellular location is the cytoplasm. Its function is as follows. Component of the cleavage factor IA (CFIA) complex, which is involved in the endonucleolytic cleavage during polyadenylation-dependent pre-mRNA 3'-end formation and cooperates with the cleavage factor NAB4/CFIB and the cleavage and polyadenylation factor (CPF) complex. The chain is mRNA 3'-end-processing protein RNA14 (RNA14) from Saccharomyces cerevisiae (strain ATCC 204508 / S288c) (Baker's yeast).